Here is a 344-residue protein sequence, read N- to C-terminus: Ferrochelatase (344 aa).

Residues His196 and Glu277 each contribute to the Fe cation site.

It belongs to the ferrochelatase family.

Its subcellular location is the cytoplasm. It catalyses the reaction heme b + 2 H(+) = protoporphyrin IX + Fe(2+). It participates in porphyrin-containing compound metabolism; protoheme biosynthesis; protoheme from protoporphyrin-IX: step 1/1. Functionally, catalyzes the ferrous insertion into protoporphyrin IX. The chain is Ferrochelatase from Synechococcus sp. (strain JA-2-3B'a(2-13)) (Cyanobacteria bacterium Yellowstone B-Prime).